We begin with the raw amino-acid sequence, 103 residues long: Small integral membrane protein 32 (103 aa).

The chain crosses the membrane as a helical span at residues 55 to 75; sequence YLLLFFLLLLSVALVVLFIGC.

The protein resides in the membrane. This chain is Small integral membrane protein 32, found in Homo sapiens (Human).